Here is a 153-residue protein sequence, read N- to C-terminus: Cytochrome c-type biogenesis protein CcmE (153 aa).

Residues 1 to 8 (MATRRGRR) are Cytoplasmic-facing. The helical; Signal-anchor for type II membrane protein transmembrane segment at 9 to 29 (ALLIAGGVGLLALAAALVLNA) threads the bilayer. At 30 to 153 (LRSNLVFFFS…PSATLQTEAR (124 aa)) the chain is on the periplasmic side. Heme contacts are provided by His-124 and Tyr-128.

It belongs to the CcmE/CycJ family.

Its subcellular location is the cell inner membrane. Heme chaperone required for the biogenesis of c-type cytochromes. Transiently binds heme delivered by CcmC and transfers the heme to apo-cytochromes in a process facilitated by CcmF and CcmH. The chain is Cytochrome c-type biogenesis protein CcmE from Bordetella bronchiseptica (strain ATCC BAA-588 / NCTC 13252 / RB50) (Alcaligenes bronchisepticus).